A 168-amino-acid polypeptide reads, in one-letter code: ATP synthase subunit b, sodium ion specific (168 aa).

The helical transmembrane segment at 9–29 threads the bilayer; it reads VSIDINMFWQIINFLILMFFF.

It belongs to the ATPase B chain family. F-type ATPases have 2 components, F(1) - the catalytic core - and F(0) - the membrane proton channel. F(1) has five subunits: alpha(3), beta(3), gamma(1), delta(1), epsilon(1). F(0) has three main subunits: a(1), b(2) and c(10-14). The alpha and beta chains form an alternating ring which encloses part of the gamma chain. F(1) is attached to F(0) by a central stalk formed by the gamma and epsilon chains, while a peripheral stalk is formed by the delta and b chains.

The protein resides in the cell inner membrane. In terms of biological role, f(1)F(0) ATP synthase produces ATP from ADP in the presence of a proton or sodium gradient. F-type ATPases consist of two structural domains, F(1) containing the extramembraneous catalytic core and F(0) containing the membrane proton channel, linked together by a central stalk and a peripheral stalk. During catalysis, ATP synthesis in the catalytic domain of F(1) is coupled via a rotary mechanism of the central stalk subunits to proton translocation. Its function is as follows. Component of the F(0) channel, it forms part of the peripheral stalk, linking F(1) to F(0). The sequence is that of ATP synthase subunit b, sodium ion specific (atpF) from Propionigenium modestum.